A 669-amino-acid chain; its full sequence is Dymeclin (669 aa).

Glycine 2 carries the N-myristoyl glycine lipid modification.

This sequence belongs to the dymeclin family. Post-translationally, myristoylated in vitro; myristoylation is not essential for protein targeting to Golgi compartment.

Its subcellular location is the cytoplasm. The protein localises to the golgi apparatus. Necessary for correct organization of Golgi apparatus. The sequence is that of Dymeclin (DYM) from Gallus gallus (Chicken).